A 479-amino-acid chain; its full sequence is MNTILAQQIANEGGVEAWMMAQQHKSLLRFLTCGSVDDGKSTLIGRLLHDTLQIYEDQLSSLHNDSKRHGTQGEKLDLALLVDGLQAEREQGITIDVAYRYFSTEKRKFIIADTPGHEQYTRNMATGASTCDLAILLIDARKGVLDQTRRHSFISTLLGIKHLVVAINKMDLVDYREETFARIREDYLTFAEQLPGDLDIRFVPLSALEGDNVAAQSANMRWHSGPTLLEVLETVDIQRAVDRQPMRFPVQYVNRPNLDFRGYAGTLASGSVKVGERIKVLPSGVESSVARIVTFDGDKEEACAGEAITLVLNDDIDISRGDLLLAANETLAPARHAAIDVVWMAEQPLAPGQSYDVKLAGKKTRARIEAIRYQIDINNLTQRDVESLPLNGIGLVEMTFDEPLALDIYQQNPVTGGLIFIDRLSNVTVGAGMVRELDERGATPPVEYSAFELELNALVRRHFPHWDARDLLGDKHGAA.

The region spanning 25–239 is the tr-type G domain; sequence KSLLRFLTCG…EVLETVDIQR (215 aa). Residues 34 to 41 are G1; it reads GSVDDGKS. 34–41 is a GTP binding site; it reads GSVDDGKS. The segment at 92–96 is G2; the sequence is GITID. Residues 113-116 are G3; that stretch reads DTPG. Residues 113–117 and 168–171 each bind GTP; these read DTPGH and NKMD. Positions 168–171 are G4; the sequence is NKMD. Positions 206–208 are G5; that stretch reads SAL.

It belongs to the TRAFAC class translation factor GTPase superfamily. Classic translation factor GTPase family. CysN/NodQ subfamily. Heterodimer composed of CysD, the smaller subunit, and CysN.

It carries out the reaction sulfate + ATP + H(+) = adenosine 5'-phosphosulfate + diphosphate. Its pathway is sulfur metabolism; hydrogen sulfide biosynthesis; sulfite from sulfate: step 1/3. Functionally, with CysD forms the ATP sulfurylase (ATPS) that catalyzes the adenylation of sulfate producing adenosine 5'-phosphosulfate (APS) and diphosphate, the first enzymatic step in sulfur assimilation pathway. APS synthesis involves the formation of a high-energy phosphoric-sulfuric acid anhydride bond driven by GTP hydrolysis by CysN coupled to ATP hydrolysis by CysD. The sequence is that of Sulfate adenylyltransferase subunit 1 from Salmonella newport (strain SL254).